Reading from the N-terminus, the 386-residue chain is Zinc finger protein 385A (386 aa).

The Matrin-type 1 zinc finger occupies 74–98 (ISCNVCQIRFNSQSQAEAHYKGNRH). Residues 88–193 (QAEAHYKGNR…ASLPGGSKEE (106 aa)) form a disordered region. The segment covering 103 to 121 (KGIEAAKTRGREPSVRESG) has biased composition (basic and acidic residues). A necessary for binding to ITPR1, CEBPA and p53/TP53 mRNAs region spans residues 145 to 351 (NGLGPAPGSP…AGSPLSLRPA (207 aa)). At serine 185 the chain carries Phosphoserine. The Matrin-type 2 zinc-finger motif lies at 201-225 (LYCALCKVAVNSLSQLEAHNKGTKH). Phosphothreonine is present on threonine 248. The Matrin-type 3 zinc finger occupies 261–285 (FHCEICNVKVNSEVQLKQHISSRRH). The segment at 279 to 305 (HISSRRHRDGVAGKPNPLLSRHKKPRG) is disordered.

Interacts with p53/TP53; the interaction is direct and enhances p53/TP53 transactivation functions on cell-cycle arrest target genes, resulting in growth arrest. Interacts with ELAVL1; the interaction is indirect, mRNA-dependent and may regulate p53/TP53 expression. Ubiquitinated upon prolonged exposure to genotoxic stress, which leads to proteasomal degradation of ZNF385A and releases p53/TP53 from cell-cycle arrest target gene promoters. As to expression, expressed in brain and testis (at protein level). In brain, the expression is located to olfactory bulb, cerebral cortex, hippocampus, satellite cells and Purkinje cells of the cerebellum molecular layer. Detected in bone marrow, white and brown adipose tissue, lung and at lower levels in the thymus.

The protein resides in the cytoplasm. It localises to the nucleus. Its subcellular location is the nucleolus. The protein localises to the cell projection. It is found in the dendrite. RNA-binding protein that affects the localization and the translation of a subset of mRNA. May play a role in adipogenesis through binding to the 3'-UTR of CEBPA mRNA and regulation of its translation. Targets ITPR1 mRNA to dendrites in Purkinje cells, and may regulate its activity-dependent translation. With ELAVL1, binds the 3'-UTR of p53/TP53 mRNAs to control their nuclear export induced by CDKN2A. Hence, may regulate p53/TP53 expression and mediate in part the CDKN2A anti-proliferative activity. May also bind CCNB1 mRNA. Alternatively, may also regulate p53/TP53 activity through direct protein-protein interaction. Interacts with p53/TP53 and promotes cell-cycle arrest over apoptosis enhancing preferentially the DNA binding and transactivation of p53/TP53 on cell-cycle arrest target genes over proapoptotic target genes. May also regulate the ubiquitination and stability of CDKN1A promoting DNA damage-induced cell cycle arrest. Also plays a role in megakaryocytes differentiation. The sequence is that of Zinc finger protein 385A (Znf385a) from Mus musculus (Mouse).